Consider the following 357-residue polypeptide: Sorbitol dehydrogenase (357 aa).

A2 is subject to N-acetylalanine. Residue C45 participates in Zn(2+) binding. Residue Y51 coordinates substrate. Zn(2+) is bound by residues H70 and E71. Residue E156 participates in substrate binding. S169 is modified (phosphoserine). NAD(+)-binding positions include V184, D204, R209, V273 to M275, and V297 to R299. Substrate is bound by residues R299 and Y300.

This sequence belongs to the zinc-containing alcohol dehydrogenase family. As to quaternary structure, homotetramer. The cofactor is Zn(2+). Testis has the highest level of expression, followed by kidney, liver, and lung. Low levels of expression are also observed in lens, brain, and skeletal muscle. Expressed in sperm flagellum and very low expression in the sperm head.

The protein resides in the mitochondrion membrane. The protein localises to the cell projection. Its subcellular location is the cilium. It is found in the flagellum. It catalyses the reaction keto-D-fructose + NADH + H(+) = D-sorbitol + NAD(+). The enzyme catalyses xylitol + NAD(+) = D-xylulose + NADH + H(+). The catalysed reaction is L-iditol + NAD(+) = keto-L-sorbose + NADH + H(+). Its activity is regulated as follows. Inhibited in vitro by p-hydroxymercuribenzoate, EDTA, l,l0-phenanthroline and N-ethylmaleimide. Its function is as follows. Polyol dehydrogenase that catalyzes the reversible NAD(+)-dependent oxidation of various sugar alcohols. Is active with D-sorbitol (D-glucitol) leading to the C2-oxidized product D-fructose. Is a key enzyme in the polyol pathway that interconverts glucose and fructose via sorbitol, which constitutes an important alternate route for glucose metabolism. May play a role in sperm motility by using sorbitol as an alternative energy source for sperm motility and protein tyrosine phosphorylation. Has no activity on ethanol. Cannot use NADP(+) as the electron acceptor. In Mus musculus (Mouse), this protein is Sorbitol dehydrogenase (Sord).